A 294-amino-acid polypeptide reads, in one-letter code: Nucleotide-binding protein Cbei_4857 (294 aa).

ATP is bound at residue 8–15 (GLSGAGKT). 59 to 62 (DIRG) is a GTP binding site.

It belongs to the RapZ-like family.

In terms of biological role, displays ATPase and GTPase activities. This is Nucleotide-binding protein Cbei_4857 from Clostridium beijerinckii (strain ATCC 51743 / NCIMB 8052) (Clostridium acetobutylicum).